A 60-amino-acid polypeptide reads, in one-letter code: Cecropin-B type 2 (60 aa).

Positions M1–A24 are cleaved as a signal peptide. I58 carries the post-translational modification Isoleucine amide.

The protein belongs to the cecropin family.

It localises to the secreted. In terms of biological role, cecropins have lytic and antibacterial activity against several Gram-positive and Gram-negative bacteria. The sequence is that of Cecropin-B type 2 (CECB2) from Aedes albopictus (Asian tiger mosquito).